The sequence spans 361 residues: Phosphoserine aminotransferase (361 aa).

L-glutamate is bound at residue Arg42. Residues 76–77 (AR), Trp102, Thr153, Asp173, and Gln196 contribute to the pyridoxal 5'-phosphate site. Lys197 is subject to N6-(pyridoxal phosphate)lysine. 238–239 (NT) is a pyridoxal 5'-phosphate binding site.

Belongs to the class-V pyridoxal-phosphate-dependent aminotransferase family. SerC subfamily. In terms of assembly, homodimer. Pyridoxal 5'-phosphate serves as cofactor.

The protein localises to the cytoplasm. It catalyses the reaction O-phospho-L-serine + 2-oxoglutarate = 3-phosphooxypyruvate + L-glutamate. It carries out the reaction 4-(phosphooxy)-L-threonine + 2-oxoglutarate = (R)-3-hydroxy-2-oxo-4-phosphooxybutanoate + L-glutamate. Its pathway is amino-acid biosynthesis; L-serine biosynthesis; L-serine from 3-phospho-D-glycerate: step 2/3. It participates in cofactor biosynthesis; pyridoxine 5'-phosphate biosynthesis; pyridoxine 5'-phosphate from D-erythrose 4-phosphate: step 3/5. Its function is as follows. Catalyzes the reversible conversion of 3-phosphohydroxypyruvate to phosphoserine and of 3-hydroxy-2-oxo-4-phosphonooxybutanoate to phosphohydroxythreonine. The protein is Phosphoserine aminotransferase of Buchnera aphidicola subsp. Schizaphis graminum (strain Sg).